The following is a 38-amino-acid chain: Large ribosomal subunit protein bL36 (38 aa).

This sequence belongs to the bacterial ribosomal protein bL36 family.

This is Large ribosomal subunit protein bL36 from Thermotoga maritima (strain ATCC 43589 / DSM 3109 / JCM 10099 / NBRC 100826 / MSB8).